A 614-amino-acid chain; its full sequence is UvrABC system protein C (614 aa).

The 79-residue stretch at 20 to 98 folds into the GIY-YIG domain; that stretch reads TAPGVYRMYA…IKSLSPRYNV (79 aa). In terms of domain architecture, UVR spans 207–242; the sequence is DELTRELGEQMQAASEALEFEQAARLRDLISSLRSM.

This sequence belongs to the UvrC family. Interacts with UvrB in an incision complex.

The protein resides in the cytoplasm. In terms of biological role, the UvrABC repair system catalyzes the recognition and processing of DNA lesions. UvrC both incises the 5' and 3' sides of the lesion. The N-terminal half is responsible for the 3' incision and the C-terminal half is responsible for the 5' incision. The sequence is that of UvrABC system protein C from Stenotrophomonas maltophilia (strain R551-3).